The sequence spans 478 residues: Dihydrolipoyl dehydrogenase (478 aa).

FAD is bound by residues 34 to 49 (EKYI…GGTC), Lys58, and Gly122. Cys49 and Cys54 are disulfide-bonded. NAD(+) is bound by residues 188 to 192 (GAGVI), Glu211, Val245, and 276 to 279 (AVGR). FAD is bound by residues Asp319 and Ala327. His451 serves as the catalytic Proton acceptor.

Belongs to the class-I pyridine nucleotide-disulfide oxidoreductase family. Homodimer. It depends on FAD as a cofactor.

It localises to the cytoplasm. The enzyme catalyses N(6)-[(R)-dihydrolipoyl]-L-lysyl-[protein] + NAD(+) = N(6)-[(R)-lipoyl]-L-lysyl-[protein] + NADH + H(+). The branched-chain alpha-keto dehydrogenase complex catalyzes the overall conversion of alpha-keto acids to acyl-CoA and CO(2). It contains multiple copies of 3 enzymatic components: branched-chain alpha-keto acid decarboxylase (E1), lipoamide acyltransferase (E2) and lipoamide dehydrogenase (E3). Its function is as follows. Also acts in the glycine cleavage system. This is Dihydrolipoyl dehydrogenase (lpdG) from Pseudomonas aeruginosa (strain ATCC 15692 / DSM 22644 / CIP 104116 / JCM 14847 / LMG 12228 / 1C / PRS 101 / PAO1).